Consider the following 223-residue polypeptide: Endonuclease III (223 aa).

One can recognise a HhH domain in the interval 118–137; it reads RDFLTAIEGIGDKTADVVLL. Residues Cys198, Cys205, Cys208, and Cys214 each coordinate [4Fe-4S] cluster.

The protein belongs to the Nth/MutY family. [4Fe-4S] cluster is required as a cofactor.

It catalyses the reaction 2'-deoxyribonucleotide-(2'-deoxyribose 5'-phosphate)-2'-deoxyribonucleotide-DNA = a 3'-end 2'-deoxyribonucleotide-(2,3-dehydro-2,3-deoxyribose 5'-phosphate)-DNA + a 5'-end 5'-phospho-2'-deoxyribonucleoside-DNA + H(+). In terms of biological role, probably part of a 4-gene DNA damage response locus in which the upstream ups system, in combination with this downstream locus, functions in homologous recombination to rescue Sulfolobales from DNA-damaging threats. DNA repair enzyme that has both DNA N-glycosylase activity and AP-lyase activity. The DNA N-glycosylase activity releases various damaged pyrimidines from DNA by cleaving the N-glycosidic bond, leaving an AP (apurinic/apyrimidinic) site. The AP-lyase activity cleaves the phosphodiester bond 3' to the AP site by a beta-elimination, leaving a 3'-terminal unsaturated sugar and a product with a terminal 5'-phosphate. Nicks UV-treated plasmid DNA in a dose-dependent manner, has no activity on untreated DNA. The polypeptide is Endonuclease III (Sulfolobus acidocaldarius (strain ATCC 33909 / DSM 639 / JCM 8929 / NBRC 15157 / NCIMB 11770)).